A 486-amino-acid chain; its full sequence is Cardiolipin synthase A (486 aa).

The next 2 helical transmembrane spans lie at 3–23 (TFYT…IAGV) and 38–58 (MAWL…YLSV). 2 consecutive PLD phosphodiesterase domains span residues 219–246 (MDLR…VDPR) and 399–426 (EGGL…DMRS). Active-site residues include His-224, Lys-226, Asp-231, His-404, Lys-406, and Asp-411.

The protein belongs to the phospholipase D family. Cardiolipin synthase subfamily. ClsA sub-subfamily.

The protein resides in the cell inner membrane. It carries out the reaction 2 a 1,2-diacyl-sn-glycero-3-phospho-(1'-sn-glycerol) = a cardiolipin + glycerol. Functionally, catalyzes the reversible phosphatidyl group transfer from one phosphatidylglycerol molecule to another to form cardiolipin (CL) (diphosphatidylglycerol) and glycerol. In Salmonella paratyphi A (strain ATCC 9150 / SARB42), this protein is Cardiolipin synthase A.